We begin with the raw amino-acid sequence, 520 residues long: Cholesterol side-chain cleavage enzyme, mitochondrial (520 aa).

Residues 1 to 39 (MLARGLPFRSALVKACPPLLNTGREGWGHHRVGTGEGAG) constitute a mitochondrion transit peptide. Positions 27-47 (WGHHRVGTGEGAGISTRTPRP) are disordered. Cys461 lines the heme pocket.

The protein belongs to the cytochrome P450 family. In terms of assembly, interacts with FDX1/adrenodoxin. Requires heme as cofactor.

Its subcellular location is the mitochondrion inner membrane. The catalysed reaction is 6 reduced [adrenodoxin] + cholesterol + 3 O2 + 6 H(+) = 4-methylpentanal + pregnenolone + 6 oxidized [adrenodoxin] + 4 H2O. The enzyme catalyses 2 reduced [adrenodoxin] + cholesterol + O2 + 2 H(+) = (22R)-hydroxycholesterol + 2 oxidized [adrenodoxin] + H2O. It carries out the reaction (22R)-hydroxycholesterol + 2 reduced [adrenodoxin] + O2 + 2 H(+) = (20R,22R)-20,22-dihydroxycholesterol + 2 oxidized [adrenodoxin] + H2O. It catalyses the reaction (20R,22R)-20,22-dihydroxycholesterol + 2 reduced [adrenodoxin] + O2 + 2 H(+) = 4-methylpentanal + pregnenolone + 2 oxidized [adrenodoxin] + 2 H2O. The protein operates within lipid metabolism; C21-steroid hormone metabolism. Its pathway is steroid metabolism; cholesterol metabolism. In terms of biological role, a cytochrome P450 monooxygenase that catalyzes the side-chain hydroxylation and cleavage of cholesterol to pregnenolone, the precursor of most steroid hormones. Catalyzes three sequential oxidation reactions of cholesterol, namely the hydroxylation at C22 followed with the hydroxylation at C20 to yield 20R,22R-hydroxycholesterol that is further cleaved between C20 and C22 to yield the C21-steroid pregnenolone and 4-methylpentanal. Mechanistically, uses molecular oxygen inserting one oxygen atom into a substrate and reducing the second into a water molecule. Two electrons are provided by NADPH via a two-protein mitochondrial transfer system comprising flavoprotein FDXR (adrenodoxin/ferredoxin reductase) and nonheme iron-sulfur protein FDX1 or FDX2 (adrenodoxin/ferredoxin). This is Cholesterol side-chain cleavage enzyme, mitochondrial from Ovis aries (Sheep).